Consider the following 407-residue polypeptide: Probable endo-beta-1,4-glucanase celB (407 aa).

The signal sequence occupies residues 1 to 18 (MALTLAATALVLLPLVTA). Asparagine 136 carries an N-linked (GlcNAc...) asparagine glycan. The Nucleophile role is filled by glutamate 216. Residue glutamate 221 is the Proton donor of the active site.

This sequence belongs to the glycosyl hydrolase 7 (cellulase C) family.

It localises to the secreted. It carries out the reaction Endohydrolysis of (1-&gt;4)-beta-D-glucosidic linkages in cellulose, lichenin and cereal beta-D-glucans.. Functionally, has endoglucanase activity on substrates containing beta-1,4 glycosidic bonds, like in carboxymethylcellulose (CMC), hydroxyethylcellulose (HEC) and beta-glucan. Involved in the degradation of complex natural cellulosic substrates. The protein is Probable endo-beta-1,4-glucanase celB (celB) of Neosartorya fischeri (strain ATCC 1020 / DSM 3700 / CBS 544.65 / FGSC A1164 / JCM 1740 / NRRL 181 / WB 181) (Aspergillus fischerianus).